A 331-amino-acid chain; its full sequence is Vitamin B12 import system permease protein BtuC (331 aa).

Helical transmembrane passes span 20-42, 62-84, 91-113, 117-136, 148-170, 190-209, 240-262, 277-299, and 306-325; these read LLIG…WLSP, LLAA…VLLG, GVVG…FPSL, VAFM…LLVV, LLLV…FYFS, SWYQ…WLVL, LAIA…VGLV, LLLP…IARL, and LPLG…WMLV.

This sequence belongs to the binding-protein-dependent transport system permease family. FecCD subfamily. The complex is composed of two ATP-binding proteins (BtuD), two transmembrane proteins (BtuC) and a solute-binding protein (BtuF).

The protein resides in the cell inner membrane. Functionally, part of the ABC transporter complex BtuCDF involved in vitamin B12 import. Involved in the translocation of the substrate across the membrane. This chain is Vitamin B12 import system permease protein BtuC, found in Vibrio cholerae serotype O1 (strain ATCC 39315 / El Tor Inaba N16961).